Reading from the N-terminus, the 187-residue chain is UPF0301 protein YqgE (187 aa).

This sequence belongs to the UPF0301 (AlgH) family.

This is UPF0301 protein YqgE from Escherichia coli O139:H28 (strain E24377A / ETEC).